Consider the following 85-residue polypeptide: MMSRNRRMRDLDSNPCLEETDASTKCMDDNRYEKDLCTPYFVKYKNCRKFWNGIMVTRRREGTVPYMPTAEERKHILESMKSLPY.

Positions 13–55 constitute a CHCH domain; it reads SNPCLEETDASTKCMDDNRYEKDLCTPYFVKYKNCRKFWNGIM. 2 consecutive short sequence motifs (cx9C motif) follow at residues 16–26 and 37–47; these read CLEETDASTKC and CTPYFVKYKNC. Cystine bridges form between Cys16–Cys47 and Cys26–Cys37.

Belongs to the CHCHD7 family.

The protein localises to the mitochondrion intermembrane space. This Xenopus tropicalis (Western clawed frog) protein is Coiled-coil-helix-coiled-coil-helix domain-containing protein 7 (chchd7).